Reading from the N-terminus, the 185-residue chain is V-type proton ATPase subunit E (185 aa).

Belongs to the V-ATPase E subunit family.

Functionally, produces ATP from ADP in the presence of a proton gradient across the membrane. The chain is V-type proton ATPase subunit E from Deinococcus deserti (strain DSM 17065 / CIP 109153 / LMG 22923 / VCD115).